Consider the following 761-residue polypeptide: Semaphorin-3D (761 aa).

The first 24 residues, 1–24 (MRASQVPNACSLLSLAMLFFPVTG), serve as a signal peptide directing secretion. Positions 32 to 519 (RLKLSYKDLL…SRDGLVQLSL (488 aa)) constitute a Sema domain. C105 and C116 are joined by a disulfide. Residue N127 is glycosylated (N-linked (GlcNAc...) asparagine). 4 disulfides stabilise this stretch: C134-C143, C274-C386, C298-C346, and C522-C540. The 119-residue stretch at 552 to 670 (PTSKRRARRQ…IHTIVKLNLN (119 aa)) folds into the Ig-like C2-type domain. The N-linked (GlcNAc...) asparagine glycan is linked to N595. An intrachain disulfide couples C653 to C719. Residues 728–754 (RRQRNKGGAKWKHVQEMKKKRNRRHHE) are compositionally biased toward basic residues. The segment at 728-761 (RRQRNKGGAKWKHVQEMKKKRNRRHHEPARPPST) is disordered.

Belongs to the semaphorin family. Developing spinal cord and developing visual system. Collapsin-1, -2, -3, and -5 bind to overlapping but distinct axon tracts.

It localises to the secreted. Functionally, induces the collapse and paralysis of neuronal growth cones. Could potentially act as repulsive cues toward specific neuronal populations. Binds to neuropilin. This Gallus gallus (Chicken) protein is Semaphorin-3D (SEMA3D).